The primary structure comprises 172 residues: 3-hydroxydecanoyl-[acyl-carrier-protein] dehydratase (172 aa).

His71 is an active-site residue.

It belongs to the thioester dehydratase family. FabA subfamily. Homodimer.

The protein resides in the cytoplasm. The catalysed reaction is a (3R)-hydroxyacyl-[ACP] = a (2E)-enoyl-[ACP] + H2O. It carries out the reaction (3R)-hydroxydecanoyl-[ACP] = (2E)-decenoyl-[ACP] + H2O. It catalyses the reaction (2E)-decenoyl-[ACP] = (3Z)-decenoyl-[ACP]. It functions in the pathway lipid metabolism; fatty acid biosynthesis. Its function is as follows. Necessary for the introduction of cis unsaturation into fatty acids. Catalyzes the dehydration of (3R)-3-hydroxydecanoyl-ACP to E-(2)-decenoyl-ACP and then its isomerization to Z-(3)-decenoyl-ACP. Can catalyze the dehydratase reaction for beta-hydroxyacyl-ACPs with saturated chain lengths up to 16:0, being most active on intermediate chain length. This chain is 3-hydroxydecanoyl-[acyl-carrier-protein] dehydratase, found in Blochmanniella floridana.